A 160-amino-acid chain; its full sequence is Putative pre-16S rRNA nuclease (160 aa).

Belongs to the YqgF nuclease family.

Its subcellular location is the cytoplasm. In terms of biological role, could be a nuclease involved in processing of the 5'-end of pre-16S rRNA. The chain is Putative pre-16S rRNA nuclease from Rhodopseudomonas palustris (strain HaA2).